We begin with the raw amino-acid sequence, 220 residues long: Ras-related protein Rab-3A (220 aa).

The GTP site is built by Ser-31, Ser-32, Val-33, Gly-34, Lys-35, Thr-36, Ser-37, Thr-48, Pro-49, Ser-53, and Thr-54. Thr-36 contributes to the Mg(2+) binding site. Positions 49–58 (PAFVSTVGID) match the Switch 1 motif. Thr-54 and Asp-77 together coordinate Mg(2+). Residue Gly-80 coordinates GTP. A Switch 2 motif is present at residues 80 to 96 (GQERYRTITTAYYRGAM). Thr-86 is subject to Phosphothreonine; by LRRK2. Positions 135, 136, 138, 166, and 167 each coordinate GTP. Phosphoserine occurs at positions 188 and 190. The disordered stretch occupies residues 194 to 220 (ADPAVTGAKQGPQLSDQQVPPHQDCAC). S-geranylgeranyl cysteine attachment occurs at residues Cys-218 and Cys-220. Cys-220 bears the Cysteine methyl ester mark.

It belongs to the small GTPase superfamily. Rab family. In terms of assembly, interacts with RIMS1 and RIMS2. Interacts with Rabphilin-3A/RPH3A and Rab effector Noc2/RPH3AL. Interacts with SYTL4. Interacts with RAB3IP. Interacts with SGSM1 and SGSM3. Interacts with SYT1. Interacts with MYH9; this interaction is essential for lysosome exocytosis and plasma membrane repair. Interacts with STXBP1; this interaction promotes RAB3A dissociation from the vesicle membrane. Interacts with SNCA. The GTP-bound form interacts with REP15. Interacts with GDI1, GDI2, CHM and CHML; phosphorylation at Thr-86 disrupts these interactions. Interacts with MADD (via uDENN domain); the GTP-bound form is preferred for interaction. Mg(2+) is required as a cofactor. Post-translationally, phosphorylation of Thr-86 in the switch II region by LRRK2 prevents the association of RAB regulatory proteins, including CHM, CHML and RAB GDP dissociation inhibitors GDI1 and GDI2. Specifically expressed in brain.

Its subcellular location is the cytoplasm. It localises to the cytosol. The protein resides in the lysosome. It is found in the cytoplasmic vesicle. The protein localises to the secretory vesicle. Its subcellular location is the cell projection. It localises to the axon. The protein resides in the cell membrane. It is found in the presynapse. The protein localises to the postsynapse. It catalyses the reaction GTP + H2O = GDP + phosphate + H(+). With respect to regulation, regulated by guanine nucleotide exchange factors (GEFs) including RAB3IL1 and MADD which promote the exchange of bound GDP for free GTP. Regulated by GTPase activating proteins (GAPs) including RAB3GAP1 and TBC1D10B which increase the GTP hydrolysis activity. Inhibited by GDP dissociation inhibitors (GDIs) which prevent Rab-GDP dissociation. Its function is as follows. The small GTPases Rab are key regulators of intracellular membrane trafficking, from the formation of transport vesicles to their fusion with membranes. Rabs cycle between an inactive GDP-bound form and an active GTP-bound form that is able to recruit to membranes different sets of downstream effectors directly responsible for vesicle formation, movement, tethering and fusion. RAB3A plays a central role in regulated exocytosis and secretion. Controls the recruitment, tethering and docking of secretory vesicles to the plasma membrane. Upon stimulation, switches to its active GTP-bound form, cycles to vesicles and recruits effectors such as RIMS1, RIMS2, Rabphilin-3A/RPH3A, RPH3AL or SYTL4 to help the docking of vesicules onto the plasma membrane. Upon GTP hydrolysis by GTPase-activating protein, dissociates from the vesicle membrane allowing the exocytosis to proceed. Stimulates insulin secretion through interaction with RIMS2 or RPH3AL effectors in pancreatic beta cells. Regulates calcium-dependent lysosome exocytosis and plasma membrane repair (PMR) via the interaction with 2 effectors, SYTL4 and myosin-9/MYH9. Acts as a positive regulator of acrosome content secretion in sperm cells by interacting with RIMS1. Also plays a role in the regulation of dopamine release by interacting with synaptotagmin I/SYT. The sequence is that of Ras-related protein Rab-3A from Homo sapiens (Human).